Here is a 413-residue protein sequence, read N- to C-terminus: Terephthalate 1,2-dioxygenase, terminal oxygenase component subunit alpha 2 (413 aa).

The Rieske domain occupies 41 to 144; it reads NYLCLESEIP…CKEEHGPRKL (104 aa). 4 residues coordinate [2Fe-2S] cluster: Cys82, His84, Cys102, and His105.

Belongs to the bacterial ring-hydroxylating dioxygenase alpha subunit family. As to quaternary structure, heterotetramer composed of 2 alpha (TphA2I and TphA2II) and 2 beta (TphA3I and TphA3II) subunits. Part of a multicomponent enzyme system composed of a reductase (TphA1I or TphA1II) and a two-subunit oxygenase component (TphA2I or TphA2II and TphA3I or TphA3II). Fe cation serves as cofactor. Requires [2Fe-2S] cluster as cofactor.

It carries out the reaction terephthalate + NADH + O2 + H(+) = (3S,4R)-3,4-dihydroxycyclohexa-1,5-diene-1,4-dicarboxylate + NAD(+). Inhibited by EDTA. Functionally, component of the terephthalate 1,2-dioxygenase multicomponent enzyme system which catalyzes the dioxygenation of terephthalate (TER/TPA) to 1,2-dihydroxy-3,5-cyclohexadiene-1,4-dicarboxylic acid (DCD). It can also use 2,5-dicarboxypyridine (PDC) and 1,4-napthalenedicarboxylic acid (NDC) as substrates, and preferentially uses NADPH which is the physiological electron donor. This is Terephthalate 1,2-dioxygenase, terminal oxygenase component subunit alpha 2 (tphA2II) from Comamonas sp.